The following is a 259-amino-acid chain: Malonyl-[acyl-carrier protein] O-methyltransferase 2 (259 aa).

It belongs to the methyltransferase superfamily.

It carries out the reaction malonyl-[ACP] + S-adenosyl-L-methionine = malonyl-[ACP] methyl ester + S-adenosyl-L-homocysteine. It functions in the pathway cofactor biosynthesis; biotin biosynthesis. Converts the free carboxyl group of a malonyl-thioester to its methyl ester by transfer of a methyl group from S-adenosyl-L-methionine (SAM). It allows to synthesize pimeloyl-ACP via the fatty acid synthetic pathway. The sequence is that of Malonyl-[acyl-carrier protein] O-methyltransferase 2 from Ilyobacter polytropus (strain ATCC 51220 / DSM 2926 / LMG 16218 / CuHBu1).